The chain runs to 486 residues: Protein nucleotidyltransferase YdiU (486 aa).

ATP contacts are provided by glycine 90, glycine 92, arginine 93, lysine 113, aspartate 125, glycine 126, arginine 176, and arginine 183. Aspartate 252 (proton acceptor) is an active-site residue. Residues asparagine 253 and aspartate 262 each contribute to the Mg(2+) site. Aspartate 262 contacts ATP.

The protein belongs to the SELO family. Mg(2+) serves as cofactor. Requires Mn(2+) as cofactor.

It carries out the reaction L-seryl-[protein] + ATP = 3-O-(5'-adenylyl)-L-seryl-[protein] + diphosphate. The enzyme catalyses L-threonyl-[protein] + ATP = 3-O-(5'-adenylyl)-L-threonyl-[protein] + diphosphate. It catalyses the reaction L-tyrosyl-[protein] + ATP = O-(5'-adenylyl)-L-tyrosyl-[protein] + diphosphate. The catalysed reaction is L-histidyl-[protein] + UTP = N(tele)-(5'-uridylyl)-L-histidyl-[protein] + diphosphate. It carries out the reaction L-seryl-[protein] + UTP = O-(5'-uridylyl)-L-seryl-[protein] + diphosphate. The enzyme catalyses L-tyrosyl-[protein] + UTP = O-(5'-uridylyl)-L-tyrosyl-[protein] + diphosphate. In terms of biological role, nucleotidyltransferase involved in the post-translational modification of proteins. It can catalyze the addition of adenosine monophosphate (AMP) or uridine monophosphate (UMP) to a protein, resulting in modifications known as AMPylation and UMPylation. The polypeptide is Protein nucleotidyltransferase YdiU (Pseudomonas entomophila (strain L48)).